The following is a 273-amino-acid chain: Nitrogenase iron protein 5 (273 aa).

ATP is bound at residue 8 to 15 (GKGGIGKS). A [4Fe-4S] cluster-binding site is contributed by Cys94. Arg97 is modified (ADP-ribosylarginine; by dinitrogenase reductase ADP-ribosyltransferase). Cys129 is a [4Fe-4S] cluster binding site.

Belongs to the NifH/BchL/ChlL family. Homodimer. The cofactor is [4Fe-4S] cluster. In terms of processing, the reversible ADP-ribosylation of Arg-97 inactivates the nitrogenase reductase and regulates nitrogenase activity.

It carries out the reaction N2 + 8 reduced [2Fe-2S]-[ferredoxin] + 16 ATP + 16 H2O = H2 + 8 oxidized [2Fe-2S]-[ferredoxin] + 2 NH4(+) + 16 ADP + 16 phosphate + 6 H(+). The key enzymatic reactions in nitrogen fixation are catalyzed by the nitrogenase complex, which has 2 components: the iron protein and the molybdenum-iron protein. The polypeptide is Nitrogenase iron protein 5 (nifH5) (Clostridium pasteurianum).